The primary structure comprises 350 residues: MESETLTAKATITTTTLPSHDETKTESTEFEKNQKRYQDLISTFPHEKGWRPKEPLIEYGGYWWLPSLLEGCIHAQEFFQARPSDFLVCSYPKTGTTWLKALTFAIANRSRFDDSSNPLLKRNPHEFVPYIEIDFPFFPEVDVLKDKGNTLFSTHIPYELLPDSVVKSGCKMVYIWREPKDTFISMWTFLHKERTELGPVSNLEESFDMFCRGLSGYGPYLNHILAYWKAYQENPDRILFLKYETMRADPLPYVKSLAEFMGHGFTAEEEEKGVVEKVVNLCSFETLKNLEANKGEKDREDRPGVYANSAYFRKGKVGDWSNYLTPEMAARIDGLMEEKFKGTGLLEHGK.

Methionine 1 is subject to N-acetylmethionine. The span at 1–17 (MESETLTAKATITTTTL) shows a compositional bias: low complexity. The interval 1–28 (MESETLTAKATITTTTLPSHDETKTEST) is disordered. Residues 19 to 28 (SHDETKTEST) show a composition bias toward basic and acidic residues. Residue 93–98 (KTGTTW) participates in 3'-phosphoadenylyl sulfate binding. Histidine 155 (proton acceptor) is an active-site residue. 3'-phosphoadenylyl sulfate is bound by residues arginine 177, serine 185, tyrosine 243, and 313–315 (RKG).

Belongs to the sulfotransferase 1 family. In terms of tissue distribution, expressed in roots, leaves and stems. Barely detected in siliques and flowers.

It localises to the cytoplasm. The catalysed reaction is an aliphatic (Z)-desulfo-glucosinolate + 3'-phosphoadenylyl sulfate = a (Z)-omega-(methylsulfanyl)-N-sulfo-alkylhydroximate S-glucoside + adenosine 3',5'-bisphosphate + H(+). Its activity is regulated as follows. Inhibited by phosphoadenosine 5'-phosphate (PAP). Functionally, sulfotransferase that utilizes 3'-phospho-5'-adenylyl sulfate (PAPS) as sulfonate donor to catalyze the sulfate conjugation of desulfo-glucosinolates (dsGSs), the final step in the biosynthesis of the glucosinolate core structure. Preferred substrate are the long-chain desulfo-glucosinolates, 7-methylthioheptyl and 8-methylthiooctyl, derived from methionine. Substrate preference is desulfo-benzyl glucosinolate &gt; desulfo-4-methylthiobutyl glucosinolate &gt; desulfo-6-methylthiohexyl glucosinolate &gt; desulfo-3-methylthiopropyl glucosinolate &gt; desulfo-indol-3-yl methyl glucosinolate &gt; desulfo-singrin &gt; desulfo-3-butenyl glucosinolate. This is Cytosolic sulfotransferase 18 (SOT18) from Arabidopsis thaliana (Mouse-ear cress).